The chain runs to 128 residues: Fatty acid binding protein 1-B.1 (128 aa).

Belongs to the calycin superfamily. Fatty-acid binding protein (FABP) family. In terms of tissue distribution, expressed in the yolk syncytial layer (YSL) and subsequently in the intestinal bulb in developing embryos and larvae. In adults, expressed in the intestine.

The protein resides in the cytoplasm. Binds free fatty acids and their coenzyme A derivatives, bilirubin, and some other small molecules in the cytoplasm. May be involved in intracellular lipid transport. In Danio rerio (Zebrafish), this protein is Fatty acid binding protein 1-B.1 (fabp1b.1).